We begin with the raw amino-acid sequence, 65 residues long: VKDGYIVDDKNCAYFCGRNAYCDDECEKNGAESGYCQWAGVYGNACWCYKLPDKVPIRVPGRCNG.

The LCN-type CS-alpha/beta domain occupies 2–64 (KDGYIVDDKN…VPIRVPGRCN (63 aa)). Cystine bridges form between C12-C63, C16-C36, C22-C46, and C26-C48.

As to expression, expressed by the venom gland.

Its subcellular location is the secreted. Functionally, alpha toxins bind voltage-independently at site-3 of sodium channels and inhibit the inactivation of the activated channels, thereby blocking neuronal transmission. In vivo, shows analgesic activity (ED(50) is 1.42 mg/kg) and antitumor activity against Ehrlich ascites tumor and S-180 fibrosarcoma models. This Olivierus martensii (Manchurian scorpion) protein is Neurotoxin BmK AGAP-SYPU2.